The sequence spans 171 residues: UPF0398 protein MGAS10270_Spy1470 (171 aa).

This sequence belongs to the UPF0398 family.

The chain is UPF0398 protein MGAS10270_Spy1470 from Streptococcus pyogenes serotype M2 (strain MGAS10270).